The following is a 353-amino-acid chain: Phospho-N-acetylmuramoyl-pentapeptide-transferase (353 aa).

The next 10 membrane-spanning stretches (helical) occupy residues 13–33, 66–86, 88–108, 130–150, 162–182, 193–213, 229–249, 256–276, 281–301, and 330–350; these read ILGY…FFTL, TPTM…LISI, FSNL…IIGF, LILQ…LSDF, PLFD…IATS, GLAT…IYIT, IGEV…FLWY, VFMG…LAII, ILLL…ILQV, and KIIV…LITL.

Belongs to the glycosyltransferase 4 family. MraY subfamily. It depends on Mg(2+) as a cofactor.

Its subcellular location is the cell inner membrane. The catalysed reaction is UDP-N-acetyl-alpha-D-muramoyl-L-alanyl-gamma-D-glutamyl-meso-2,6-diaminopimeloyl-D-alanyl-D-alanine + di-trans,octa-cis-undecaprenyl phosphate = di-trans,octa-cis-undecaprenyl diphospho-N-acetyl-alpha-D-muramoyl-L-alanyl-D-glutamyl-meso-2,6-diaminopimeloyl-D-alanyl-D-alanine + UMP. Its pathway is cell wall biogenesis; peptidoglycan biosynthesis. Its function is as follows. Catalyzes the initial step of the lipid cycle reactions in the biosynthesis of the cell wall peptidoglycan: transfers peptidoglycan precursor phospho-MurNAc-pentapeptide from UDP-MurNAc-pentapeptide onto the lipid carrier undecaprenyl phosphate, yielding undecaprenyl-pyrophosphoryl-MurNAc-pentapeptide, known as lipid I. The protein is Phospho-N-acetylmuramoyl-pentapeptide-transferase of Sulfurimonas denitrificans (strain ATCC 33889 / DSM 1251) (Thiomicrospira denitrificans (strain ATCC 33889 / DSM 1251)).